Here is a 644-residue protein sequence, read N- to C-terminus: Exoribonuclease 2 (644 aa).

The RNB domain occupies 189-516; that stretch reads REDLTALDFV…NHRLLKAVIK (328 aa). Positions 561-643 constitute an S1 motif domain; the sequence is DTRFAAEIVD…ETRSIIARPV (83 aa).

This sequence belongs to the RNR ribonuclease family. RNase II subfamily.

The protein resides in the cytoplasm. The catalysed reaction is Exonucleolytic cleavage in the 3'- to 5'-direction to yield nucleoside 5'-phosphates.. In terms of biological role, involved in mRNA degradation. Hydrolyzes single-stranded polyribonucleotides processively in the 3' to 5' direction. In Escherichia coli O6:K15:H31 (strain 536 / UPEC), this protein is Exoribonuclease 2.